A 452-amino-acid polypeptide reads, in one-letter code: Tripartite motif-containing protein 49 (452 aa).

The segment at 15-56 adopts an RING-type zinc-finger fold; the sequence is CPLCMNYFIDPVTIDCGHSFCRPCFYLNWQDIPFLVQCSECT. The segment at 88–129 adopts a B box-type zinc-finger fold; that stretch reads SEEQMCGTHRETKKIFCEVDRSLLCLLCSSSQEHRYHRHRPI. Residues cysteine 93, histidine 96, cysteine 115, and histidine 121 each contribute to the Zn(2+) site. Residues 269 to 452 enclose the B30.2/SPRY domain; it reads ELSAGPITGL…LRPIFCCIHF (184 aa).

The protein belongs to the TRIM/RBCC family. In terms of tissue distribution, preferentially expressed in testis.

The protein is Tripartite motif-containing protein 49 (TRIM49) of Homo sapiens (Human).